A 266-amino-acid polypeptide reads, in one-letter code: Type III pantothenate kinase (266 aa).

9–16 (DAGNSRIK) is an ATP binding site. Residues Y96 and 103–106 (GSDR) each bind substrate. Residue D105 is the Proton acceptor of the active site. T129 provides a ligand contact to ATP. T189 provides a ligand contact to substrate.

This sequence belongs to the type III pantothenate kinase family. In terms of assembly, homodimer. NH4(+) serves as cofactor. The cofactor is K(+).

The protein resides in the cytoplasm. The catalysed reaction is (R)-pantothenate + ATP = (R)-4'-phosphopantothenate + ADP + H(+). It participates in cofactor biosynthesis; coenzyme A biosynthesis; CoA from (R)-pantothenate: step 1/5. Catalyzes the phosphorylation of pantothenate (Pan), the first step in CoA biosynthesis. This Burkholderia cenocepacia (strain ATCC BAA-245 / DSM 16553 / LMG 16656 / NCTC 13227 / J2315 / CF5610) (Burkholderia cepacia (strain J2315)) protein is Type III pantothenate kinase.